The primary structure comprises 203 residues: MRMSKALAAVVAISVSLSAAAMGVDATVESTCSDAAASDKRVHLAMCLSQLGHHRDADAWGLAKAATLVGVDKADLAADDIKELEAGASTAGIKPALAECAKQYRGVGFAFASAHDVINNRAYDVGEKKLDEALSLTQKCNAAFAKIGVPLQQPLAQLTADTIQIAIIAKAITCLVNVNNNPALVAAAAAAAAAKAPQQSQYP.

The signal sequence occupies residues 1–26 (MRMSKALAAVVAISVSLSAAAMGVDA). 2 cysteine pairs are disulfide-bonded: Cys32–Cys47 and Cys100–Cys140.

Belongs to the PMEI family.

The protein resides in the secreted. The protein localises to the extracellular space. It localises to the apoplast. Pectin methylesterase (PME) inhibitor that inhibits PME in vitro. This chain is Pectinesterase inhibitor 12, found in Oryza sativa subsp. japonica (Rice).